A 932-amino-acid chain; its full sequence is Protocadherin gamma-A9 (932 aa).

The first 28 residues, Met-1 to Ala-28, serve as a signal peptide directing secretion. Cadherin domains lie at Ser-29–Phe-133, Gln-134–Phe-242, Ala-243–Val-347, Thr-348–Phe-452, Ser-453–Ile-562, and Asp-570–Asp-683. The Extracellular segment spans residues Ser-29–Tyr-692. N-linked (GlcNAc...) asparagine glycosylation is found at Asn-47 and Asn-127. Residues Asn-389, Asn-419, and Asn-545 are each glycosylated (N-linked (GlcNAc...) asparagine). A helical membrane pass occupies residues Leu-693–Ala-713. Residues Leu-714–Lys-932 are Cytoplasmic-facing. Disordered stretches follow at residues Asp-803–Asn-841 and Ala-902–Lys-932. Polar residues predominate over residues Trp-816–Asn-841. Residues Asn-922–Lys-932 show a composition bias toward basic residues.

It is found in the cell membrane. Functionally, potential calcium-dependent cell-adhesion protein. May be involved in the establishment and maintenance of specific neuronal connections in the brain. The polypeptide is Protocadherin gamma-A9 (PCDHGA9) (Pan troglodytes (Chimpanzee)).